The following is a 349-amino-acid chain: MNTTSPAAPSSSGVSFISLLVIIVLSVALAVGLPGNSFVVWSILAKLRKRSVTALMVLHLALADLAVLLTAPFFLYSVAQGTWTFGLSSCRLFHYVCGVSMYASVLLIMTMSLDRSLAVALPFVSQKLRTKAVAWRVLAGIWVMSVLLATPVLLYRTVHLGLNNRSLTCFLKYPSERHRAFHLFFEVITGFLLPFLVVVASYCDIGRRLRARRFRRSRRTGRLVALIILAFAAFWLPYHVVNLAEGFRAAAGKALGSGPVGRRLLLARHVLITLAFLSSSVNPLLYACAGGGLLRSAGVGFIAKLLEGTGSETSSSRRKGTLAQTLRGTPASPEPDPAESLTASTNPLE.

Residues 1–19 (MNTTSPAAPSSSGVSFISL) lie on the Extracellular side of the membrane. An N-linked (GlcNAc...) asparagine glycan is attached at Asn-2. A helical transmembrane segment spans residues 20-42 (LVIIVLSVALAVGLPGNSFVVWS). Over 43–54 (ILAKLRKRSVTA) the chain is Cytoplasmic. A helical membrane pass occupies residues 55-75 (LMVLHLALADLAVLLTAPFFL). At 76-91 (YSVAQGTWTFGLSSCR) the chain is on the extracellular side. The helical transmembrane segment at 92–113 (LFHYVCGVSMYASVLLIMTMSL) threads the bilayer. Over 114 to 138 (DRSLAVALPFVSQKLRTKAVAWRVL) the chain is Cytoplasmic. The helical transmembrane segment at 139–159 (AGIWVMSVLLATPVLLYRTVH) threads the bilayer. Residues 160 to 179 (LGLNNRSLTCFLKYPSERHR) lie on the Extracellular side of the membrane. An N-linked (GlcNAc...) asparagine glycan is attached at Asn-164. The chain crosses the membrane as a helical span at residues 180-200 (AFHLFFEVITGFLLPFLVVVA). Residues 201 to 222 (SYCDIGRRLRARRFRRSRRTGR) lie on the Cytoplasmic side of the membrane. The helical transmembrane segment at 223–243 (LVALIILAFAAFWLPYHVVNL) threads the bilayer. Residues 244–269 (AEGFRAAAGKALGSGPVGRRLLLARH) are Extracellular-facing. The helical transmembrane segment at 270 to 290 (VLITLAFLSSSVNPLLYACAG) threads the bilayer. At 291 to 349 (GGLLRSAGVGFIAKLLEGTGSETSSSRRKGTLAQTLRGTPASPEPDPAESLTASTNPLE) the chain is on the cytoplasmic side. The interval 311–349 (SETSSSRRKGTLAQTLRGTPASPEPDPAESLTASTNPLE) is disordered.

It belongs to the G-protein coupled receptor 1 family. Phosphorylated by GRK6 upon leukotriene B4 binding; which promotes desensitization.

Its subcellular location is the cell membrane. Receptor for extracellular ATP &gt; UTP and ADP. The activity of this receptor is mediated by G proteins which activate a phosphatidylinositol-calcium second messenger system. May be the cardiac P2Y receptor involved in the regulation of cardiac muscle contraction through modulation of L-type calcium currents. Is a receptor for leukotriene B4, a potent chemoattractant involved in inflammation and immune response. In Bos taurus (Bovine), this protein is Leukotriene B4 receptor 1 (LTB4R).